A 303-amino-acid chain; its full sequence is Signal recognition particle receptor FtsY (303 aa).

Residues 108-115 (GVNGVGKT), 190-194 (DTAGR), and 254-257 (TKLD) contribute to the GTP site.

Belongs to the GTP-binding SRP family. FtsY subfamily. In terms of assembly, part of the signal recognition particle protein translocation system, which is composed of SRP and FtsY. SRP is a ribonucleoprotein composed of Ffh and a 4.5S RNA molecule.

It localises to the cell inner membrane. It is found in the cytoplasm. It carries out the reaction GTP + H2O = GDP + phosphate + H(+). In terms of biological role, involved in targeting and insertion of nascent membrane proteins into the cytoplasmic membrane. Acts as a receptor for the complex formed by the signal recognition particle (SRP) and the ribosome-nascent chain (RNC). Interaction with SRP-RNC leads to the transfer of the RNC complex to the Sec translocase for insertion into the membrane, the hydrolysis of GTP by both Ffh and FtsY, and the dissociation of the SRP-FtsY complex into the individual components. This chain is Signal recognition particle receptor FtsY, found in Rickettsia typhi (strain ATCC VR-144 / Wilmington).